Consider the following 184-residue polypeptide: Threonylcarbamoyl-AMP synthase (184 aa).

Positions Met-1–Gly-184 constitute a YrdC-like domain.

This sequence belongs to the SUA5 family. TsaC subfamily.

Its subcellular location is the cytoplasm. The catalysed reaction is L-threonine + hydrogencarbonate + ATP = L-threonylcarbamoyladenylate + diphosphate + H2O. Functionally, required for the formation of a threonylcarbamoyl group on adenosine at position 37 (t(6)A37) in tRNAs that read codons beginning with adenine. Catalyzes the conversion of L-threonine, HCO(3)(-)/CO(2) and ATP to give threonylcarbamoyl-AMP (TC-AMP) as the acyladenylate intermediate, with the release of diphosphate. The sequence is that of Threonylcarbamoyl-AMP synthase from Actinobacillus pleuropneumoniae serotype 5b (strain L20).